Consider the following 310-residue polypeptide: 2-phospho-L-lactate transferase (310 aa).

2 residues coordinate 7,8-didemethyl-8-hydroxy-5-deazariboflavin: aspartate 50 and arginine 89.

Belongs to the CofD family. Homodimer. The cofactor is Mg(2+).

The enzyme catalyses (2S)-lactyl-2-diphospho-5'-guanosine + 7,8-didemethyl-8-hydroxy-5-deazariboflavin = oxidized coenzyme F420-0 + GMP + H(+). It functions in the pathway cofactor biosynthesis; coenzyme F420 biosynthesis. In terms of biological role, catalyzes the transfer of the 2-phospholactate moiety from (2S)-lactyl-2-diphospho-5'-guanosine to 7,8-didemethyl-8-hydroxy-5-deazariboflavin (FO) with the formation of oxidized coenzyme F420-0 and GMP. This is 2-phospho-L-lactate transferase from Methanopyrus kandleri (strain AV19 / DSM 6324 / JCM 9639 / NBRC 100938).